The chain runs to 495 residues: Probable lysine-specific demethylase 4A (495 aa).

The JmjN domain occupies 18 to 60 (IMTFRPSYEEFQNFSAYIEYIESRGAHLAGLAKIQPPAEWVPR). Tyr139 contacts 2-oxoglutarate. A JmjC domain is found at 149 to 315 (DEDLDVWNIG…YGKRASICRC (167 aa)). His195 and Glu197 together coordinate Fe cation. Positions 205 and 213 each coordinate 2-oxoglutarate. Zn(2+) contacts are provided by Cys241 and His247. Lys248 is a 2-oxoglutarate binding site. His283 serves as a coordination point for Fe cation. Residues Cys313 and Cys315 each contribute to the Zn(2+) site. At Ser409 the chain carries Phosphoserine.

The protein belongs to the JHDM3 histone demethylase family. Fe(2+) is required as a cofactor.

It localises to the nucleus. It carries out the reaction N(6),N(6),N(6)-trimethyl-L-lysyl(9)-[histone H3] + 2 2-oxoglutarate + 2 O2 = N(6)-methyl-L-lysyl(9)-[histone H3] + 2 formaldehyde + 2 succinate + 2 CO2. It catalyses the reaction N(6),N(6),N(6)-trimethyl-L-lysyl(36)-[histone H3] + 2 2-oxoglutarate + 2 O2 = N(6)-methyl-L-lysyl(36)-[histone H3] + 2 formaldehyde + 2 succinate + 2 CO2. Probable histone demethylase that specifically demethylates 'Lys-9' and 'Lys-36' residues of histone H3, thereby playing a central role in histone code. Demethylation of Lys residue generates formaldehyde and succinate. The polypeptide is Probable lysine-specific demethylase 4A (Kdm4A) (Drosophila melanogaster (Fruit fly)).